Reading from the N-terminus, the 611-residue chain is Leukotriene A-4 hydrolase (611 aa).

K73 is modified (N6-acetyllysine). Residues 135–137 and 267–272 contribute to the a peptide site; these read QCQ and PYGGME. H296 serves as a coordination point for Zn(2+). The active-site Proton acceptor is the E297. H300 and E319 together coordinate Zn(2+). K337 bears the N6-acetyllysine mark. Residue Y384 is the Proton donor of the active site. The residue at position 414 (K414) is an N6-acetyllysine. Residue S416 is modified to Phosphoserine. 564-566 lines the a peptide pocket; the sequence is RMK. K573 is subject to N6-acetyllysine.

It belongs to the peptidase M1 family. As to quaternary structure, monomer. It depends on Zn(2+) as a cofactor. Phosphorylation at Ser-416 inhibits leukotriene-A4 hydrolase activity. As to expression, isoform 1 and isoform 2 are expressed in monocytes, lymphocytes, neutrophils, reticulocytes, platelets and fibroblasts.

It is found in the cytoplasm. It carries out the reaction leukotriene A4 + H2O = leukotriene B4. It catalyses the reaction (5S,6S)-epoxy-(18R)-hydroxy-(7E,9E,11Z,14Z,16E)-eicosapentaenoate + H2O = resolvin E1. The enzyme catalyses (5S,6S)-epoxy-(18S)-hydroxy-(7E,9E,11Z,14Z,16E)-eicosapentaenoate + H2O = 18S-resolvin E1. The catalysed reaction is Release of the N-terminal residue from a tripeptide.. The protein operates within lipid metabolism; leukotriene B4 biosynthesis. Inhibited by bestatin. The epoxide hydrolase activity is restrained by suicide inactivation that involves binding of LTA4 to Tyr-379. 4-(4-benzylphenyl)thiazol-2-amine (ARM1) selectively inhibits the epoxide hydrolase activity. Its function is as follows. Bifunctional zinc metalloenzyme that comprises both epoxide hydrolase (EH) and aminopeptidase activities. Acts as an epoxide hydrolase to catalyze the conversion of LTA4 to the pro-inflammatory mediator leukotriene B4 (LTB4). Also has aminopeptidase activity, with high affinity for N-terminal arginines of various synthetic tripeptides. In addition to its pro-inflammatory EH activity, may also counteract inflammation by its aminopeptidase activity, which inactivates by cleavage another neutrophil attractant, the tripeptide Pro-Gly-Pro (PGP), a bioactive fragment of collagen generated by the action of matrix metalloproteinase-9 (MMP9) and prolylendopeptidase (PREPL). Involved also in the biosynthesis of resolvin E1 and 18S-resolvin E1 from eicosapentaenoic acid, two lipid mediators that show potent anti-inflammatory and pro-resolving actions. This chain is Leukotriene A-4 hydrolase (LTA4H), found in Homo sapiens (Human).